Here is a 212-residue protein sequence, read N- to C-terminus: Thaumatin-like protein 1b (212 aa).

Disulfide bonds link cysteine 47–cysteine 57, cysteine 62–cysteine 69, cysteine 117–cysteine 200, cysteine 122–cysteine 183, cysteine 130–cysteine 146, cysteine 150–cysteine 159, and cysteine 160–cysteine 170.

Belongs to the thaumatin family.

It localises to the secreted. The chain is Thaumatin-like protein 1b from Malus domestica (Apple).